A 340-amino-acid chain; its full sequence is Holliday junction branch migration complex subunit RuvB (340 aa).

Residues 1-184 (MNENLDPTTK…FGISSRLQYY (184 aa)) are large ATPase domain (RuvB-L). ATP contacts are provided by residues L23, R24, G65, K68, T69, T70, 131 to 133 (EDF), R174, Y184, and R221. Position 69 (T69) interacts with Mg(2+). The tract at residues 185 to 255 (STELLTTIVE…ISKYALKALN (71 aa)) is small ATPAse domain (RuvB-S). A head domain (RuvB-H) region spans residues 258–340 (AHGLDEMDNK…INTNIQGGLF (83 aa)). DNA is bound by residues R313 and R318.

Belongs to the RuvB family. Homohexamer. Forms an RuvA(8)-RuvB(12)-Holliday junction (HJ) complex. HJ DNA is sandwiched between 2 RuvA tetramers; dsDNA enters through RuvA and exits via RuvB. An RuvB hexamer assembles on each DNA strand where it exits the tetramer. Each RuvB hexamer is contacted by two RuvA subunits (via domain III) on 2 adjacent RuvB subunits; this complex drives branch migration. In the full resolvosome a probable DNA-RuvA(4)-RuvB(12)-RuvC(2) complex forms which resolves the HJ.

The protein resides in the cytoplasm. The catalysed reaction is ATP + H2O = ADP + phosphate + H(+). The RuvA-RuvB-RuvC complex processes Holliday junction (HJ) DNA during genetic recombination and DNA repair, while the RuvA-RuvB complex plays an important role in the rescue of blocked DNA replication forks via replication fork reversal (RFR). RuvA specifically binds to HJ cruciform DNA, conferring on it an open structure. The RuvB hexamer acts as an ATP-dependent pump, pulling dsDNA into and through the RuvAB complex. RuvB forms 2 homohexamers on either side of HJ DNA bound by 1 or 2 RuvA tetramers; 4 subunits per hexamer contact DNA at a time. Coordinated motions by a converter formed by DNA-disengaged RuvB subunits stimulates ATP hydrolysis and nucleotide exchange. Immobilization of the converter enables RuvB to convert the ATP-contained energy into a lever motion, pulling 2 nucleotides of DNA out of the RuvA tetramer per ATP hydrolyzed, thus driving DNA branch migration. The RuvB motors rotate together with the DNA substrate, which together with the progressing nucleotide cycle form the mechanistic basis for DNA recombination by continuous HJ branch migration. Branch migration allows RuvC to scan DNA until it finds its consensus sequence, where it cleaves and resolves cruciform DNA. This is Holliday junction branch migration complex subunit RuvB from Flavobacterium johnsoniae (strain ATCC 17061 / DSM 2064 / JCM 8514 / BCRC 14874 / CCUG 350202 / NBRC 14942 / NCIMB 11054 / UW101) (Cytophaga johnsonae).